Consider the following 467-residue polypeptide: Probable tryptophanase (467 aa).

Lysine 263 carries the N6-(pyridoxal phosphate)lysine modification.

The protein belongs to the beta-eliminating lyase family. Pyridoxal 5'-phosphate serves as cofactor.

The catalysed reaction is L-tryptophan + H2O = indole + pyruvate + NH4(+). It functions in the pathway amino-acid degradation; L-tryptophan degradation via pyruvate pathway; indole and pyruvate from L-tryptophan: step 1/1. This is Probable tryptophanase (tnaA) from Aeropyrum pernix (strain ATCC 700893 / DSM 11879 / JCM 9820 / NBRC 100138 / K1).